The chain runs to 312 residues: Pre-mRNA-splicing factor 38A (312 aa).

Residues 1–179 (MANRTVKDAH…VLEETEQLDP (179 aa)) are N-terminal protein interaction domain. Positions 180–312 (RVSALEEDMD…SHKKSRRGNE (133 aa)) are disordered. Residues 184–201 (LEEDMDDVESSEEEEDDD) show a composition bias toward acidic residues. Residues 202–223 (EKGRDPSPEHHRRNYRDLDRPR) are compositionally biased toward basic and acidic residues. Basic residues-rich tracts occupy residues 224-294 (RSPS…RSHS) and 301-312 (KKSHKKSRRGNE).

Belongs to the PRP38 family. Component of the spliceosome B complex.

The protein resides in the nucleus. In terms of biological role, involved in pre-mRNA splicing as a component of the spliceosome. In Xenopus laevis (African clawed frog), this protein is Pre-mRNA-splicing factor 38A (prpf38a).